The chain runs to 178 residues: Ribosome maturation factor RimM (178 aa).

The PRC barrel domain occupies 101 to 178 (EGEFYWYQLQ…EMRVDWDADF (78 aa)).

Belongs to the RimM family. As to quaternary structure, binds ribosomal protein uS19.

It is found in the cytoplasm. Its function is as follows. An accessory protein needed during the final step in the assembly of 30S ribosomal subunit, possibly for assembly of the head region. Essential for efficient processing of 16S rRNA. May be needed both before and after RbfA during the maturation of 16S rRNA. It has affinity for free ribosomal 30S subunits but not for 70S ribosomes. This chain is Ribosome maturation factor RimM, found in Ectopseudomonas mendocina (strain ymp) (Pseudomonas mendocina).